The following is a 1376-amino-acid chain: Ubiquitin carboxyl-terminal hydrolase 47 (1376 aa).

Lys122 bears the N6-acetyllysine mark. One can recognise a USP domain in the interval 188 to 564 (VGLVNQAMTC…NAYMLIYRLK (377 aa)). The Nucleophile role is filled by Cys197. Residues 426–452 (EKSPQTESCTDSGAENEGSCHSDQMSN) are disordered. The span at 430 to 452 (QTESCTDSGAENEGSCHSDQMSN) shows a compositional bias: polar residues. His503 acts as the Proton acceptor in catalysis. Ser832 bears the Phosphoserine mark. Disordered stretches follow at residues 835 to 863 (SYSK…KGPA), 880 to 971 (LKSL…SSDT), and 985 to 1025 (GLDS…ESGK). Residues 882–900 (SLSLQQQQQDGDNGDSSKS) show a composition bias toward low complexity. Ser911 and Ser934 each carry phosphoserine. Residues 930 to 939 (HIQTSDPENF) are compositionally biased toward polar residues. Basic and acidic residues predominate over residues 941-951 (SEERSDSDVNN). Residues 954–970 (STSSVDSDILSSSHSSD) show a composition bias toward low complexity. Over residues 998-1007 (KANEGKKETW) the composition is skewed to basic and acidic residues. A compositionally biased stretch (acidic residues) spans 1008 to 1021 (DTAEEDSGTDSEYD). A Phosphoserine modification is found at Ser1014. Thr1016 carries the phosphothreonine modification. Ser1018 carries the post-translational modification Phosphoserine.

It belongs to the peptidase C19 family. USP47 subfamily. As to quaternary structure, interacts with BTRC and FBXW11. Interacts with POLB.

The protein resides in the cytoplasm. The enzyme catalyses Thiol-dependent hydrolysis of ester, thioester, amide, peptide and isopeptide bonds formed by the C-terminal Gly of ubiquitin (a 76-residue protein attached to proteins as an intracellular targeting signal).. Functionally, ubiquitin-specific protease that specifically deubiquitinates monoubiquitinated DNA polymerase beta (POLB), stabilizing POLB thereby playing a role in base-excision repair (BER). Acts as a regulator of cell growth and genome integrity. May also indirectly regulate CDC25A expression at a transcriptional level. The protein is Ubiquitin carboxyl-terminal hydrolase 47 (Usp47) of Mus musculus (Mouse).